Here is a 357-residue protein sequence, read N- to C-terminus: Solute carrier family 25 member 3 (357 aa).

A mitochondrion-targeting transit peptide spans 1–45; it reads MFSSVAHLARANPFNAPHLQLVHDGLSGPRSPPAPPRRSRHLAAA. Residues 46 to 58 lie on the Mitochondrial intermembrane side of the membrane; that stretch reads AVEEYSCEFGSMK. Solcar repeat units lie at residues 58 to 142, 155 to 239, and 256 to 334; these read KYYA…FKAL, WRTS…TVEA, and EQLV…VKVY. A helical membrane pass occupies residues 59–81; sequence YYALCGFGGVLSCGLTHTAVVPL. The Mitochondrial matrix portion of the chain corresponds to 82-116; the sequence is DLVKCRMQVDPQKYKGIFNGFSITLKEDGVRGLAK. An N6-acetyllysine modification is found at K94. K107 bears the N6-methyllysine mark. A helical membrane pass occupies residues 117–136; the sequence is GWAPTLIGYSMQGLCKFGFY. Residues 137-156 lie on the Mitochondrial intermembrane side of the membrane; the sequence is EVFKALYSNILGEENTYLWR. A helical membrane pass occupies residues 157–178; the sequence is TSLYLASSASAEFFADIALAPM. At 179 to 213 the chain is on the mitochondrial matrix side; it reads EAAKVRIQTQPGYANTLREAVPKMYKEEGLNAFYK. Y191 is subject to Phosphotyrosine. K204 carries the post-translational modification N6-acetyllysine. The chain crosses the membrane as a helical span at residues 214–233; it reads GVAPLWMRQIPYTMMKFACF. The Mitochondrial intermembrane segment spans residues 234–256; the sequence is ERTVEALYKFVVPKPRSECTKAE. The helical transmembrane segment at 257–279 threads the bilayer; it reads QLVVTFVAGYIAGVFCAIVSHPA. At 280–309 the chain is on the mitochondrial matrix side; that stretch reads DSVVSVLNKEKGSTASQVLQRLGFRGVWKG. A helical transmembrane segment spans residues 310–328; that stretch reads LFARIIMIGTLTALQWFIY. The Mitochondrial intermembrane portion of the chain corresponds to 329-357; that stretch reads DSVKVYFRLPRPPPPEMPESLKKKLGLTE.

This sequence belongs to the mitochondrial carrier (TC 2.A.29) family. Interacts with PPIF; the interaction is impaired by CsA.

The protein localises to the mitochondrion inner membrane. The catalysed reaction is phosphate(in) + H(+)(in) = phosphate(out) + H(+)(out). In terms of biological role, inorganic ion transporter that transports phosphate or copper ions across the mitochondrial inner membrane into the matrix compartment. Mediates proton-coupled symport of phosphate ions necessary for mitochondrial oxidative phosphorylation of ADP to ATP. Transports copper ions probably in the form of anionic copper(I) complexes to maintain mitochondrial matrix copper pool and to supply copper for cytochrome C oxidase complex assembly. May also play a role in regulation of the mitochondrial permeability transition pore (mPTP). The protein is Solute carrier family 25 member 3 of Mus musculus (Mouse).